Reading from the N-terminus, the 288-residue chain is tRNA dimethylallyltransferase (288 aa).

ATP is bound at residue 17–24 (GPTASGKT). Residue 19–24 (TASGKT) coordinates substrate.

This sequence belongs to the IPP transferase family. As to quaternary structure, monomer. Mg(2+) serves as cofactor.

It catalyses the reaction adenosine(37) in tRNA + dimethylallyl diphosphate = N(6)-dimethylallyladenosine(37) in tRNA + diphosphate. Its function is as follows. Catalyzes the transfer of a dimethylallyl group onto the adenine at position 37 in tRNAs that read codons beginning with uridine, leading to the formation of N6-(dimethylallyl)adenosine (i(6)A). The protein is tRNA dimethylallyltransferase of Jannaschia sp. (strain CCS1).